Reading from the N-terminus, the 74-residue chain is Sec-independent protein translocase protein TatA (74 aa).

A helical membrane pass occupies residues 1–21 (MGSMSWIHWVIVLGIVALLFG). The interval 51 to 74 (EVADNKAKSALPRTEAEAEELRKS) is disordered. Basic and acidic residues predominate over residues 64-74 (TEAEAEELRKS).

This sequence belongs to the TatA/E family. As to quaternary structure, the Tat system comprises two distinct complexes: a TatABC complex, containing multiple copies of TatA, TatB and TatC subunits, and a separate TatA complex, containing only TatA subunits. Substrates initially bind to the TatABC complex, which probably triggers association of the separate TatA complex to form the active translocon.

It localises to the cell inner membrane. Its function is as follows. Part of the twin-arginine translocation (Tat) system that transports large folded proteins containing a characteristic twin-arginine motif in their signal peptide across membranes. TatA could form the protein-conducting channel of the Tat system. The sequence is that of Sec-independent protein translocase protein TatA from Caulobacter vibrioides (strain ATCC 19089 / CIP 103742 / CB 15) (Caulobacter crescentus).